A 521-amino-acid polypeptide reads, in one-letter code: Cytochrome P450 monooxygenase ARMGADRAFT_1018420 (521 aa).

The chain crosses the membrane as a helical span at residues 9–26; that stretch reads VSPIWILTAIVVVAYTTV. Cys-443 lines the heme pocket. N-linked (GlcNAc...) asparagine glycosylation occurs at Asn-450.

This sequence belongs to the cytochrome P450 family. Heme serves as cofactor.

It localises to the membrane. It functions in the pathway secondary metabolite biosynthesis. Cytochrome P450 monooxygenase, part of the gene cluster that mediates the biosynthesis of melleolides, a range of antifungal and phytotoxic polyketide derivatives composed of an orsellinic acid (OA) moiety esterified to various sesquiterpene alcohols. The first step in melleolides biosynthesis is performed by the delta(6)-protoilludene synthase PRO1 which catalyzes the cyclization of farnesyl diphosphate to protoilludene. The orsellinic acid synthase armB produces OA by condensing acetyl-CoA with 3 malonyl-CoA units in a three-round chain elongation reaction folowed by a C2-C7 ring closure. ArmB further catalyzes the trans-esterification of OA to the various sesquiterpene alcohols resulting from the hydroxylation of protoilludene. The melleolides cluster also includes 5 cytochrome P450 monooxygenases, 4 NAD(+)-dependent oxidoreductases, one flavin-dependent oxidoreductase, and one O-methyltransferase. The cytochrome P450 monooxygenases may be involved in protoilludene hydroxylation to elaborate melleolides with multiple alcohol groups, such as melleolide D, which carries alcohol functionalities at C-4, C-5, C-10, and C-13. The role of the NAD(+)-dependent enzymes remains unknown. Numerous melleolides, including arnamial, show 5'-O-methylation of the aromatic moiety which may be catalyzed by the methyltransferase encoded in the cluster. The flavin-dependent oxidoreductase might represent the dehydrogenase yielding the aldehyde in position 1 of arnamial and other melleolides. Finally, several halogenase localized outside of the cluster, are able to catalyze the transfer of a single chlorine atom to the melleolide backbone, resulting in a 6'-chloromelleolide product. In Armillaria gallica (Bulbous honey fungus), this protein is Cytochrome P450 monooxygenase ARMGADRAFT_1018420.